Consider the following 500-residue polypeptide: Probable cytosol aminopeptidase (500 aa).

Mn(2+) is bound by residues Lys-264 and Asp-269. Lys-276 is a catalytic residue. Mn(2+) is bound by residues Asp-287, Asp-346, and Glu-348. The active site involves Arg-350.

This sequence belongs to the peptidase M17 family. Requires Mn(2+) as cofactor.

The protein resides in the cytoplasm. It catalyses the reaction Release of an N-terminal amino acid, Xaa-|-Yaa-, in which Xaa is preferably Leu, but may be other amino acids including Pro although not Arg or Lys, and Yaa may be Pro. Amino acid amides and methyl esters are also readily hydrolyzed, but rates on arylamides are exceedingly low.. The catalysed reaction is Release of an N-terminal amino acid, preferentially leucine, but not glutamic or aspartic acids.. In terms of biological role, presumably involved in the processing and regular turnover of intracellular proteins. Catalyzes the removal of unsubstituted N-terminal amino acids from various peptides. The protein is Probable cytosol aminopeptidase of Rhodopseudomonas palustris (strain BisB5).